Here is a 181-residue protein sequence, read N- to C-terminus: MAGTNDSCPLVKNILLLDSEGKRVAVKYYSDDWATNASKLAFEKYVFSKTSKTNARTEAEITLLESNIVVYKFAQDLHFFVTGGENENELVLSSVLQGFFDAVALLLRNNVEKMEALENLDLIFLCLDEMVDQGMVLETDANVIAGKVAMQSAEASGSLSEQTLTQALATAREHLARSLLT.

This sequence belongs to the adaptor complexes small subunit family. As to quaternary structure, oligomeric complex that consists of at least the alpha, beta, beta', gamma, delta, epsilon and zeta subunits.

The protein resides in the cytoplasm. It localises to the golgi apparatus membrane. It is found in the cytoplasmic vesicle. Its subcellular location is the COPI-coated vesicle membrane. Its function is as follows. The coatomer is a cytosolic protein complex that binds to dilysine motifs and reversibly associates with Golgi non-clathrin-coated vesicles, which further mediate biosynthetic protein transport from the ER, via the Golgi up to the trans Golgi network. Coatomer complex is required for budding from Golgi membranes, and is essential for the retrograde Golgi-to-ER transport of dilysine-tagged proteins. The zeta subunit may be involved in regulating the coat assembly and, hence, the rate of biosynthetic protein transport due to its association-dissociation properties with the coatomer complex. This is Coatomer subunit zeta-3 from Arabidopsis thaliana (Mouse-ear cress).